The sequence spans 292 residues: Hypersensitive-induced response protein 4 (292 aa).

Gly-2 carries N-myristoyl glycine lipidation.

Self-interacts and forms heteromers. Interacts with NB-LRR class of R proteins before R proteins (e.g. RPS2 or RPM1) are activated by the effectors.

The protein resides in the cell membrane. This is Hypersensitive-induced response protein 4 (HIR4) from Arabidopsis thaliana (Mouse-ear cress).